Here is a 172-residue protein sequence, read N- to C-terminus: Large ribosomal subunit protein uL10 (172 aa).

Belongs to the universal ribosomal protein uL10 family. Part of the ribosomal stalk of the 50S ribosomal subunit. The N-terminus interacts with L11 and the large rRNA to form the base of the stalk. The C-terminus forms an elongated spine to which L12 dimers bind in a sequential fashion forming a multimeric L10(L12)X complex.

In terms of biological role, forms part of the ribosomal stalk, playing a central role in the interaction of the ribosome with GTP-bound translation factors. The polypeptide is Large ribosomal subunit protein uL10 (Brucella abortus (strain S19)).